The chain runs to 827 residues: Glycerol-3-phosphate acyltransferase (827 aa).

The HXXXXD motif motif lies at 325 to 330 (CHRSHM).

The protein belongs to the GPAT/DAPAT family.

The protein resides in the cell inner membrane. The catalysed reaction is sn-glycerol 3-phosphate + an acyl-CoA = a 1-acyl-sn-glycero-3-phosphate + CoA. The protein operates within phospholipid metabolism; CDP-diacylglycerol biosynthesis; CDP-diacylglycerol from sn-glycerol 3-phosphate: step 1/3. This is Glycerol-3-phosphate acyltransferase from Escherichia coli (strain SMS-3-5 / SECEC).